A 1463-amino-acid chain; its full sequence is Alpha-agarase (1463 aa).

Residues 1–27 (MITSSKKIVSAMLSTSLWIGVASAAYA) form the signal peptide. Residues 28 to 684 (ETTNVEAEGY…PSTLSESIFT (657 aa)) constitute a propeptide that is removed on maturation. Disordered stretches follow at residues 166–191 (VTPE…PGTP) and 512–549 (TDDI…PQPG). Residues 518 to 536 (CANTPSGETANATGCSSSQ) are compositionally biased toward polar residues. A PA14 domain is found at 534-677 (SSQEGGGTDP…GGTNFVHPST (144 aa)). Residues 701–832 (IIVELESFVF…QWSGDRVRFT (132 aa)) enclose the CBM6 domain.

Belongs to the glycosyl hydrolase 96 family. In terms of assembly, monomer. It depends on Ca(2+) as a cofactor.

It catalyses the reaction Endohydrolysis of 1,3-alpha-L-galactosidic linkages in agarose, yielding agarotetraose as the major product.. Its function is as follows. Alpha-agarase. Hydrolyzes agarose, agarohexaose, neoagarohexaose and porphyran. Hydrolysis of porphyran by this enzyme improves its antioxidant activity. Does not hydrolyze kappa-carrageenan, iota-carrageenen or lambda-carrageenan. The polypeptide is Alpha-agarase (Thalassotalea agarivorans (Thalassomonas agarivorans)).